The sequence spans 138 residues: Putative pre-16S rRNA nuclease (138 aa).

This sequence belongs to the YqgF nuclease family.

The protein localises to the cytoplasm. Could be a nuclease involved in processing of the 5'-end of pre-16S rRNA. The protein is Putative pre-16S rRNA nuclease of Karelsulcia muelleri (strain GWSS) (Sulcia muelleri).